Consider the following 138-residue polypeptide: uncharacterized protein (138 aa).

One can recognise an HTH merR-type domain in the interval 3-72 (LYSISKAAEK…LEDINEFVKD (70 aa)). Residues 6-25 (ISKAAEKTSISSYTLRYYEK) constitute a DNA-binding region (H-T-H motif).

This is an uncharacterized protein from Bacillus subtilis (strain 168).